A 412-amino-acid polypeptide reads, in one-letter code: Proline-rich protein 30 (412 aa).

The span at 33-45 (HNLQPLSAHQSLR) shows a compositional bias: polar residues. Disordered regions lie at residues 33-75 (HNLQ…QFGS), 123-174 (PLTP…SNRQ), and 318-412 (PKEV…KSSV). Composition is skewed to low complexity over residues 126–142 (PSFS…PHSP) and 334–350 (PSPA…ADPA). The span at 353–372 (TPSQTRSFRSAGLQSPNSPR) shows a compositional bias: polar residues.

The chain is Proline-rich protein 30 (PRR30) from Macaca fascicularis (Crab-eating macaque).